A 437-amino-acid polypeptide reads, in one-letter code: Glycogen synthase (437 aa).

ADP-alpha-D-glucose is bound at residue K15.

The protein belongs to the glycosyltransferase 1 family. Bacterial/plant glycogen synthase subfamily.

It catalyses the reaction [(1-&gt;4)-alpha-D-glucosyl](n) + ADP-alpha-D-glucose = [(1-&gt;4)-alpha-D-glucosyl](n+1) + ADP + H(+). It functions in the pathway glycan biosynthesis; glycogen biosynthesis. In terms of biological role, synthesizes alpha-1,4-glucan chains using ADP-glucose. The polypeptide is Glycogen synthase (Thermus thermophilus (strain ATCC 27634 / DSM 579 / HB8)).